The sequence spans 313 residues: Porphobilinogen deaminase (313 aa).

Position 242 is an S-(dipyrrolylmethanemethyl)cysteine (Cys-242).

This sequence belongs to the HMBS family. As to quaternary structure, monomer. Dipyrromethane serves as cofactor.

It carries out the reaction 4 porphobilinogen + H2O = hydroxymethylbilane + 4 NH4(+). It participates in porphyrin-containing compound metabolism; protoporphyrin-IX biosynthesis; coproporphyrinogen-III from 5-aminolevulinate: step 2/4. Functionally, tetrapolymerization of the monopyrrole PBG into the hydroxymethylbilane pre-uroporphyrinogen in several discrete steps. This chain is Porphobilinogen deaminase, found in Escherichia coli O17:K52:H18 (strain UMN026 / ExPEC).